The following is a 1240-amino-acid chain: MGKEDEKESGRDKMKSFGSIRSIFMHADGVDWILMALGLIGAVGDGFITPVVVFIFNTLLNNLGTSSSNNKTFMQTISKNVVALLYVACGSWVICFLEGYCWTRTGERQAARMREKYLRAVLRQDVGYFDLHVTSTSDVITSISSDSLVIQDFLSEKLPNFLMNASAFVASYIVSFILMWRLTIVGFPFIILLLVPGLMYGRALVSISRKIHEQYNEAGSIAEQAISSVRTVYAFGSENKMIGKFSTALRGSVKLGLRQGLAKGITIGSNGVTHAIWAFLTWYGSRLVMNHGSKGGTVFVVISCITYGGVSLGQSLSNLKYFSEAFVAWERILEVIKRVPDIDSNKKEGQILERMKGEVEFNHVKFTYLSRPETTIFDDLCLKIPAGKTVALVGGSGSGKSTVISLLQRFYDPIAGEILIDGVSIDKLQVNWLRSQMGLVSQEPVLFATSITENILFGKEDASLDEVVEAAKASNAHTFISQFPLGYKTQVGERGVQMSGGQKQRIAIARAIIKSPKILLLDEATSALDSESERVVQESLDNASIGRTTIVIAHRLSTIRNADVICVIHNGQIVETGSHEELLKRIDGQYTSLVSLQQMENEESNVNINVSVTKDQVMSLSKDFKYSQHNSIGSTSSSIVTNVSDLIPNDNQPLVPSFTRLMVMNRPEWKHALYGCLSAALVGVLQPVSAYSAGSVISVFFLTSHDQIKEKTRIYVLLFVGLAIFSFLVNISQHYGFAYMGEYLTKRIREQMLSKILTFEVNWFDIDDNSSGAICSRLAKDANVVRSMVGDRMSLLVQTISAVIIACIIGLVIAWRLAIVMISVQPLIVVCFYTQRVLLKSLSEKASKAQDESSKLAAEAVSNIRTITAFSSQERIIKLLKKVQEGPRRESVHRSWLAGIVLGTSRSLITCTSALNFWYGGRLIADGKIVSKAFFEIFLIFVTTGRVIADAGTMTTDLARGLDAVGSVFAVLDRCTTIEPKNPDGYVAEKIKGQITFLNVDFAYPTRPDVVIFENFSIEIDEGKSTAIVGTSGSGKSTIIGLIERFYDPLKGTVKIDGRDIRSYHLRSLRKYISLVSQEPMLFAGTIRENIMYGGTSDKIDESEIIEAAKAANAHDFITSLSNGYDTNCGDKGVQLSGGQKQRIAIARAVLKNPSVLLLDEATSALDSKSERVVQDALERVMVGRTSIMIAHRLSTIQNCDMIVVLGKGKIVESGTHSSLLEKGPTGTYFSLAGIQRTLC.

An ABC transmembrane type-1 1 domain is found at 35-324 (MALGLIGAVG…SLSNLKYFSE (290 aa)). The chain crosses the membrane as a helical span at residues 36–56 (ALGLIGAVGDGFITPVVVFIF). Asn-70 carries an N-linked (GlcNAc...) asparagine glycan. The next 5 membrane-spanning stretches (helical) occupy residues 81–101 (VVAL…EGYC), 158–180 (LPNF…ILMW), 184–206 (IVGF…ALVS), 264–284 (GITI…TWYG), and 296–316 (GTVF…GQSL). In terms of domain architecture, ABC transporter 1 spans 359-595 (VEFNHVKFTY…IDGQYTSLVS (237 aa)). Residue 394–401 (GGSGSGKS) participates in ATP binding. Asn-542, Asn-609, and Asn-642 each carry an N-linked (GlcNAc...) asparagine glycan. In terms of domain architecture, ABC transmembrane type-1 2 spans 672–960 (ALYGCLSAAL…AGTMTTDLAR (289 aa)). The next 2 helical transmembrane spans lie at 681–701 (LVGV…SVFF) and 714–734 (IYVL…ISQH). N-linked (GlcNAc...) asparagine glycosylation occurs at Asn-769. A run of 4 helical transmembrane segments spans residues 793-815 (MSLL…VIAW), 817-839 (LAIV…RVLL), 896-919 (WLAG…NFWY), and 923-943 (LIAD…IFVT). One can recognise an ABC transporter 2 domain in the interval 995–1233 (ITFLNVDFAY…GPTGTYFSLA (239 aa)). Asn-1015 is a glycosylation site (N-linked (GlcNAc...) asparagine). 1030–1037 (GTSGSGKS) is a binding site for ATP.

It belongs to the ABC transporter superfamily. ABCB family. Multidrug resistance exporter (TC 3.A.1.201) subfamily.

It localises to the membrane. In Arabidopsis thaliana (Mouse-ear cress), this protein is ABC transporter B family member 17 (ABCB17).